Here is a 415-residue protein sequence, read N- to C-terminus: 3-isopropylmalate dehydratase large subunit (415 aa).

[4Fe-4S] cluster contacts are provided by C297, C355, and C358.

It belongs to the aconitase/IPM isomerase family. LeuC type 2 subfamily. In terms of assembly, heterodimer of LeuC and LeuD. [4Fe-4S] cluster serves as cofactor.

It carries out the reaction (2R,3S)-3-isopropylmalate = (2S)-2-isopropylmalate. It functions in the pathway amino-acid biosynthesis; L-leucine biosynthesis; L-leucine from 3-methyl-2-oxobutanoate: step 2/4. In terms of biological role, catalyzes the isomerization between 2-isopropylmalate and 3-isopropylmalate, via the formation of 2-isopropylmaleate. This is 3-isopropylmalate dehydratase large subunit from Metallosphaera sedula (strain ATCC 51363 / DSM 5348 / JCM 9185 / NBRC 15509 / TH2).